Consider the following 71-residue polypeptide: Bacteriocin carnobacteriocin-A (71 aa).

Positions 1–18 are excised as a propeptide; the sequence is MNNVKELSIKEMQQVTGG. A disulfide bond links cysteine 40 and cysteine 69.

The protein resides in the secreted. Functionally, has antibacterial activity. This chain is Bacteriocin carnobacteriocin-A (cbnBA), found in Carnobacterium maltaromaticum (Carnobacterium piscicola).